The chain runs to 56 residues: Large ribosomal subunit protein bL32 (56 aa).

The protein belongs to the bacterial ribosomal protein bL32 family.

This chain is Large ribosomal subunit protein bL32, found in Bacillus cereus (strain ATCC 14579 / DSM 31 / CCUG 7414 / JCM 2152 / NBRC 15305 / NCIMB 9373 / NCTC 2599 / NRRL B-3711).